Reading from the N-terminus, the 328-residue chain is Cytochrome f (328 aa).

An N-terminal signal peptide occupies residues 1-44 (MRTFNFLSFPQVHRQALVKAVLVAIATVSLLLTSDVINPQSAQA). Heme is bound by residues Y45, C66, C69, and H70. Residues 294-314 (IKGLVLFLGGIMLCQILLVIK) form a helical membrane-spanning segment.

Belongs to the cytochrome f family. In terms of assembly, the 4 large subunits of the cytochrome b6-f complex are cytochrome b6, subunit IV (17 kDa polypeptide, PetD), cytochrome f and the Rieske protein, while the 4 small subunits are PetG, PetL, PetM and PetN. The complex functions as a dimer. Requires heme as cofactor.

It localises to the cellular thylakoid membrane. Functionally, component of the cytochrome b6-f complex, which mediates electron transfer between photosystem II (PSII) and photosystem I (PSI), cyclic electron flow around PSI, and state transitions. This chain is Cytochrome f, found in Microcystis aeruginosa (strain NIES-843 / IAM M-2473).